The following is a 404-amino-acid chain: Proteasomal ubiquitin receptor ADRM1-B (404 aa).

Positions Ser-17–Pro-130 constitute a Pru domain. Disordered regions lie at residues Asn-128–Leu-149, Gly-195–Thr-258, and Phe-376–Asp-404. Low complexity predominate over residues Gly-195–Ser-247. The segment covering Asn-248–Thr-258 has biased composition (polar residues). Residues Thr-278–Glu-390 form the DEUBAD domain. A compositionally biased stretch (basic and acidic residues) spans Gln-386–Lys-395.

Belongs to the ADRM1 family. As to quaternary structure, component of the 19S proteasome regulatory particle complex. The 26S proteasome consists of a 20S core particle (CP) and two 19S regulatory subunits (RP).

The protein resides in the cytoplasm. Its subcellular location is the nucleus. Functionally, component of the 26S proteasome, a multiprotein complex involved in the ATP-dependent degradation of ubiquitinated proteins. This complex plays a key role in the maintenance of protein homeostasis by removing misfolded or damaged proteins, which could impair cellular functions, and by removing proteins whose functions are no longer required. Therefore, the proteasome participates in numerous cellular processes, including cell cycle progression, apoptosis, or DNA damage repair. Within the complex, functions as a proteasomal ubiquitin receptor. In Xenopus laevis (African clawed frog), this protein is Proteasomal ubiquitin receptor ADRM1-B (adrm1-b).